The primary structure comprises 201 residues: Peptidyl-tRNA hydrolase (201 aa).

Tyr-17 is a binding site for tRNA. Residue His-22 is the Proton acceptor of the active site. Residues Tyr-68, Asn-70, and Asn-116 each contribute to the tRNA site.

This sequence belongs to the PTH family. As to quaternary structure, monomer.

The protein resides in the cytoplasm. It carries out the reaction an N-acyl-L-alpha-aminoacyl-tRNA + H2O = an N-acyl-L-amino acid + a tRNA + H(+). Its function is as follows. Hydrolyzes ribosome-free peptidyl-tRNAs (with 1 or more amino acids incorporated), which drop off the ribosome during protein synthesis, or as a result of ribosome stalling. Catalyzes the release of premature peptidyl moieties from peptidyl-tRNA molecules trapped in stalled 50S ribosomal subunits, and thus maintains levels of free tRNAs and 50S ribosomes. The sequence is that of Peptidyl-tRNA hydrolase from Lawsonia intracellularis (strain PHE/MN1-00).